The following is a 104-amino-acid chain: Large ribosomal subunit protein bL21 (104 aa).

The protein belongs to the bacterial ribosomal protein bL21 family. Part of the 50S ribosomal subunit. Contacts protein L20.

Its function is as follows. This protein binds to 23S rRNA in the presence of protein L20. This is Large ribosomal subunit protein bL21 from Salinispora tropica (strain ATCC BAA-916 / DSM 44818 / JCM 13857 / NBRC 105044 / CNB-440).